Here is a 313-residue protein sequence, read N- to C-terminus: Aspartate carbamoyltransferase catalytic subunit (313 aa).

Positions 58 and 59 each coordinate carbamoyl phosphate. Lys86 contacts L-aspartate. 3 residues coordinate carbamoyl phosphate: Arg108, His136, and Gln139. 2 residues coordinate L-aspartate: Arg169 and Arg223. Gly264 and Pro265 together coordinate carbamoyl phosphate.

The protein belongs to the aspartate/ornithine carbamoyltransferase superfamily. ATCase family. As to quaternary structure, heterododecamer (2C3:3R2) of six catalytic PyrB chains organized as two trimers (C3), and six regulatory PyrI chains organized as three dimers (R2).

It catalyses the reaction carbamoyl phosphate + L-aspartate = N-carbamoyl-L-aspartate + phosphate + H(+). The protein operates within pyrimidine metabolism; UMP biosynthesis via de novo pathway; (S)-dihydroorotate from bicarbonate: step 2/3. Catalyzes the condensation of carbamoyl phosphate and aspartate to form carbamoyl aspartate and inorganic phosphate, the committed step in the de novo pyrimidine nucleotide biosynthesis pathway. This chain is Aspartate carbamoyltransferase catalytic subunit, found in Syntrophotalea carbinolica (strain DSM 2380 / NBRC 103641 / GraBd1) (Pelobacter carbinolicus).